A 266-amino-acid chain; its full sequence is Undecaprenyl-diphosphatase 1 (266 aa).

8 consecutive transmembrane segments (helical) span residues methionine 1–isoleucine 21, glutamine 39–phenylalanine 59, tryptophan 87–isoleucine 107, threonine 114–methionine 134, alanine 149–alanine 169, alanine 183–valine 203, alanine 218–leucine 238, and methionine 246–leucine 266.

The protein belongs to the UppP family.

The protein localises to the cell inner membrane. It catalyses the reaction di-trans,octa-cis-undecaprenyl diphosphate + H2O = di-trans,octa-cis-undecaprenyl phosphate + phosphate + H(+). In terms of biological role, catalyzes the dephosphorylation of undecaprenyl diphosphate (UPP). Confers resistance to bacitracin. In Shewanella oneidensis (strain ATCC 700550 / JCM 31522 / CIP 106686 / LMG 19005 / NCIMB 14063 / MR-1), this protein is Undecaprenyl-diphosphatase 1.